The chain runs to 271 residues: Hydroxyethylthiazole kinase (271 aa).

Methionine 46 is a substrate binding site. ATP contacts are provided by arginine 122 and threonine 169. Substrate is bound at residue glycine 196.

Belongs to the Thz kinase family. Requires Mg(2+) as cofactor.

The catalysed reaction is 5-(2-hydroxyethyl)-4-methylthiazole + ATP = 4-methyl-5-(2-phosphooxyethyl)-thiazole + ADP + H(+). It participates in cofactor biosynthesis; thiamine diphosphate biosynthesis; 4-methyl-5-(2-phosphoethyl)-thiazole from 5-(2-hydroxyethyl)-4-methylthiazole: step 1/1. Functionally, catalyzes the phosphorylation of the hydroxyl group of 4-methyl-5-beta-hydroxyethylthiazole (THZ). The protein is Hydroxyethylthiazole kinase of Alkaliphilus oremlandii (strain OhILAs) (Clostridium oremlandii (strain OhILAs)).